The chain runs to 99 residues: MVELVITEKRDNPILKRKELKYTLKFENARTPSREEIKEIIAKHEGAQKELIIVESNKQLTGKHEIVGYTKIYQDKASAMLYEPDYELIRNGLKQKEAK.

This sequence belongs to the eukaryotic ribosomal protein eS24 family.

The polypeptide is Small ribosomal subunit protein eS24 (rps2e) (Thermoplasma volcanium (strain ATCC 51530 / DSM 4299 / JCM 9571 / NBRC 15438 / GSS1)).